The sequence spans 309 residues: Hydroxyacylglutathione hydrolase, mitochondrial (309 aa).

The N-terminal 24 residues, 1-24 (MVLGRGSLCLRSLSALGATCARRG), are a transit peptide targeting the mitochondrion. An N6-acetyllysine modification is found at lysine 90. Histidine 103, histidine 105, aspartate 107, and histidine 108 together coordinate Zn(2+). The residue at position 117 (lysine 117) is an N6-acetyllysine. Histidine 159 and aspartate 183 together coordinate Zn(2+). Substrate contacts are provided by residues 192–194 (KFY) and 222–224 (HEY). A Zn(2+)-binding site is contributed by histidine 222. At lysine 230 the chain carries N6-acetyllysine; alternate. Lysine 230 carries the post-translational modification N6-succinyllysine; alternate. Substrate is bound at residue 298–301 (RREK).

The protein belongs to the metallo-beta-lactamase superfamily. Glyoxalase II family. As to quaternary structure, monomer. It depends on Zn(2+) as a cofactor.

The protein localises to the mitochondrion matrix. Its subcellular location is the cytoplasm. It carries out the reaction an S-(2-hydroxyacyl)glutathione + H2O = a 2-hydroxy carboxylate + glutathione + H(+). The enzyme catalyses (R)-S-lactoylglutathione + H2O = (R)-lactate + glutathione + H(+). Its pathway is secondary metabolite metabolism; methylglyoxal degradation; (R)-lactate from methylglyoxal: step 2/2. Thiolesterase that catalyzes the hydrolysis of S-D-lactoyl-glutathione to form glutathione and D-lactic acid. This Mus musculus (Mouse) protein is Hydroxyacylglutathione hydrolase, mitochondrial (Hagh).